The primary structure comprises 127 residues: MIVAVGHDLIEIERIRRMLLREGPRAQKLFAPCELEYAARLSDPTPSLAARFAAKEAFQKVWPRPHGWRDVWVERERTPDGPFPFTPPVLGFTETIAEEMRERGWVAHLTLTHTKEHASAVVVLEER.

Mg(2+)-binding residues include Asp-8 and Glu-56.

It belongs to the P-Pant transferase superfamily. AcpS family. Mg(2+) is required as a cofactor.

The protein resides in the cytoplasm. The catalysed reaction is apo-[ACP] + CoA = holo-[ACP] + adenosine 3',5'-bisphosphate + H(+). Transfers the 4'-phosphopantetheine moiety from coenzyme A to a Ser of acyl-carrier-protein. This Deinococcus deserti (strain DSM 17065 / CIP 109153 / LMG 22923 / VCD115) protein is Holo-[acyl-carrier-protein] synthase.